The following is a 210-amino-acid chain: Uracil phosphoribosyltransferase (210 aa).

Residues Arg-78, Arg-103, and 130–138 contribute to the 5-phospho-alpha-D-ribose 1-diphosphate site; that span reads DPMLATGGS. Uracil is bound by residues Ile-195 and 200 to 202; that span reads GDA. Residue Asp-201 coordinates 5-phospho-alpha-D-ribose 1-diphosphate.

Belongs to the UPRTase family. It depends on Mg(2+) as a cofactor.

The catalysed reaction is UMP + diphosphate = 5-phospho-alpha-D-ribose 1-diphosphate + uracil. The protein operates within pyrimidine metabolism; UMP biosynthesis via salvage pathway; UMP from uracil: step 1/1. Allosterically activated by GTP. Its function is as follows. Catalyzes the conversion of uracil and 5-phospho-alpha-D-ribose 1-diphosphate (PRPP) to UMP and diphosphate. This chain is Uracil phosphoribosyltransferase, found in Leifsonia xyli subsp. xyli (strain CTCB07).